The sequence spans 224 residues: Ribose-5-phosphate isomerase A 2 (224 aa).

Substrate is bound by residues 27 to 30 (SGST), 83 to 86 (DGTD), and 96 to 99 (KGGG). Residue Glu-105 is the Proton acceptor of the active site. Lys-123 provides a ligand contact to substrate.

The protein belongs to the ribose 5-phosphate isomerase family. Homodimer.

The catalysed reaction is aldehydo-D-ribose 5-phosphate = D-ribulose 5-phosphate. Its pathway is carbohydrate degradation; pentose phosphate pathway; D-ribose 5-phosphate from D-ribulose 5-phosphate (non-oxidative stage): step 1/1. Catalyzes the reversible conversion of ribose-5-phosphate to ribulose 5-phosphate. This is Ribose-5-phosphate isomerase A 2 from Oceanobacillus iheyensis (strain DSM 14371 / CIP 107618 / JCM 11309 / KCTC 3954 / HTE831).